A 143-amino-acid polypeptide reads, in one-letter code: Transcriptional regulator MraZ (143 aa).

2 consecutive SpoVT-AbrB domains span residues 5–47 (EYQH…PLNE) and 76–119 (ATEC…SDER).

The protein belongs to the MraZ family. In terms of assembly, forms oligomers.

It is found in the cytoplasm. The protein resides in the nucleoid. The protein is Transcriptional regulator MraZ of Enterococcus faecalis (strain ATCC 700802 / V583).